An 86-amino-acid chain; its full sequence is Large ribosomal subunit protein bL28 (86 aa).

This sequence belongs to the bacterial ribosomal protein bL28 family.

The polypeptide is Large ribosomal subunit protein bL28 (Phocaeicola vulgatus (strain ATCC 8482 / DSM 1447 / JCM 5826 / CCUG 4940 / NBRC 14291 / NCTC 11154) (Bacteroides vulgatus)).